The chain runs to 297 residues: Polyketide transferase ATR5 (297 aa).

The segment at 49 to 272 (DVAVWFQKRG…FVLAENKGHM (224 aa)) is abhydrolase domain.

The protein belongs to the polyketide transferase af380 family.

The protein operates within mycotoxin biosynthesis. Polyketide transferase; part of the core atranone cluster (CAC) which products are predicted to catalyze most or all steps of atranone synthesis, starting from geranylgeranyl pyrophosphate (GGPP). The initial cyclization of GGPP to dolabellane is probably performed by the terpene cyclase ATR13. The Baeyer-Villiger oxidation near the end of the atranone synthesis, which converts atranones D and E to atranones F and G is predicted to be catalyzed by the monooxygenase ATR8. Of the CAC's other predicted gene products, the reducing PKS ATR6 might synthesize a polyketide chain. This polyketide is probably transferred onto the atranone backbone by the polyketide transferase ATR5. Other predicted CAC products include 4 oxygenases (ATR2, ATR3, ATR4, and ATR14), 3 short-chain reductases (ATR7, ATR9, and ATR10), and a methyltransferase (ATR12). These may all be involved in the various steps of atranone biosynthesis, although their specific roles must await experimental determination. This Stachybotrys chlorohalonatus (strain IBT 40285) protein is Polyketide transferase ATR5.